We begin with the raw amino-acid sequence, 222 residues long: Iron-sulfur cluster repair protein YtfE (222 aa).

The protein belongs to the RIC family. YtfE subfamily. In terms of assembly, homodimer.

The protein localises to the cytoplasm. Functionally, di-iron-containing protein involved in the repair of iron-sulfur clusters damaged by oxidative and nitrosative stress conditions. This Musicola paradisiaca (strain Ech703) (Dickeya paradisiaca) protein is Iron-sulfur cluster repair protein YtfE.